Reading from the N-terminus, the 140-residue chain is Nucleoside diphosphate kinase (140 aa).

ATP is bound by residues Lys11, Phe59, Arg87, Thr93, Arg104, and Asn114. The active-site Pros-phosphohistidine intermediate is the His117.

It belongs to the NDK family. In terms of assembly, homotetramer. The cofactor is Mg(2+).

The protein localises to the cytoplasm. The enzyme catalyses a 2'-deoxyribonucleoside 5'-diphosphate + ATP = a 2'-deoxyribonucleoside 5'-triphosphate + ADP. It carries out the reaction a ribonucleoside 5'-diphosphate + ATP = a ribonucleoside 5'-triphosphate + ADP. Functionally, major role in the synthesis of nucleoside triphosphates other than ATP. The ATP gamma phosphate is transferred to the NDP beta phosphate via a ping-pong mechanism, using a phosphorylated active-site intermediate. The chain is Nucleoside diphosphate kinase from Methylorubrum populi (strain ATCC BAA-705 / NCIMB 13946 / BJ001) (Methylobacterium populi).